The primary structure comprises 704 residues: Myb-related protein B (704 aa).

HTH myb-type domains are found at residues 26–77 (RDNR…LRVL), 78–133 (NPDL…NPEV), and 134–184 (KKSC…KRKV). Residues 54 to 77 (WKFLASHFPNRTDQQCQYRWLRVL) constitute a DNA-binding region (H-T-H motif). Residue Lys104 forms a Glycyl lysine isopeptide (Lys-Gly) (interchain with G-Cter in SUMO2) linkage. 2 consecutive DNA-binding regions (H-T-H motif) follow at residues 106–129 (WTLI…HNHL) and 157–180 (WAEI…NSTI). A Glycyl lysine isopeptide (Lys-Gly) (interchain with G-Cter in SUMO2) cross-link involves residue Lys197. Thr267 is modified (phosphothreonine). Lys275 participates in a covalent cross-link: Glycyl lysine isopeptide (Lys-Gly) (interchain with G-Cter in SUMO2). Ser282 is modified (phosphoserine). Residues 325–412 (LSKFDLPEEP…GSGIGTPPSV (88 aa)) form a disordered region. Positions 339 to 366 (SVVSSPVQPQTSQQQQEEALQSSQQAAT) are enriched in low complexity. The residue at position 396 (Ser396) is a Phosphoserine. Lys414 participates in a covalent cross-link: Glycyl lysine isopeptide (Lys-Gly) (interchain with G-Cter in SUMO2). 2 positions are modified to phosphothreonine; by CDK2: Thr443 and Thr447. Glycyl lysine isopeptide (Lys-Gly) (interchain with G-Cter in SUMO2) cross-links involve residues Lys450 and Lys485. Residues Thr490 and Thr497 each carry the phosphothreonine; by CDK2 modification. Residues Lys502 and Lys513 each participate in a glycyl lysine isopeptide (Lys-Gly) (interchain with G-Cter in SUMO2) cross-link. Position 524 is a phosphothreonine; by CDK2 (Thr524). Residues Lys527, Lys537, and Lys550 each participate in a glycyl lysine isopeptide (Lys-Gly) (interchain with G-Cter in SUMO2) cross-link. Phosphoserine; by CDK2 is present on Ser581. Residues Lys588 and Lys600 each participate in a glycyl lysine isopeptide (Lys-Gly) (interchain with G-Cter in SUMO2) cross-link. The tract at residues 603–626 (SSTMPKPLSLPTSVTPSSCGFTSP) is disordered. A compositionally biased stretch (low complexity) spans 607-620 (PKPLSLPTSVTPSS). Glycyl lysine isopeptide (Lys-Gly) (interchain with G-Cter in SUMO2) cross-links involve residues Lys629, Lys643, and Lys652.

As to quaternary structure, component of the DREAM complex (also named LINC complex) at least composed of E2F4, E2F5, LIN9, LIN37, LIN52, LIN54, MYBL1, MYBL2, RBL1, RBL2, RBBP4, TFDP1 and TFDP2. The complex exists in quiescent cells where it represses cell cycle-dependent genes. It dissociates in S phase when LIN9, LIN37, LIN52 and LIN54 form a subcomplex that binds to MYBL2. Interacts with CCNF (via the Cyclin N-terminal domain). Post-translationally, phosphorylated by cyclin A/CDK2 during S-phase. Phosphorylation at Thr-524 is probably involved in transcriptional activity.

It localises to the nucleus. Its function is as follows. Transcription factor involved in the regulation of cell survival, proliferation, and differentiation. Transactivates the expression of the CLU gene. The chain is Myb-related protein B (Mybl2) from Mus musculus (Mouse).